The chain runs to 305 residues: UDP-3-O-acyl-N-acetylglucosamine deacetylase (305 aa).

Positions 78, 237, and 241 each coordinate Zn(2+). His264 serves as the catalytic Proton donor.

The protein belongs to the LpxC family. The cofactor is Zn(2+).

The enzyme catalyses a UDP-3-O-[(3R)-3-hydroxyacyl]-N-acetyl-alpha-D-glucosamine + H2O = a UDP-3-O-[(3R)-3-hydroxyacyl]-alpha-D-glucosamine + acetate. The protein operates within glycolipid biosynthesis; lipid IV(A) biosynthesis; lipid IV(A) from (3R)-3-hydroxytetradecanoyl-[acyl-carrier-protein] and UDP-N-acetyl-alpha-D-glucosamine: step 2/6. Catalyzes the hydrolysis of UDP-3-O-myristoyl-N-acetylglucosamine to form UDP-3-O-myristoylglucosamine and acetate, the committed step in lipid A biosynthesis. This chain is UDP-3-O-acyl-N-acetylglucosamine deacetylase, found in Burkholderia cenocepacia (strain HI2424).